The sequence spans 351 residues: L-threonine 3-dehydrogenase (351 aa).

Cysteine 39 provides a ligand contact to Zn(2+). Active-site charge relay system residues include threonine 41 and histidine 44. 6 residues coordinate Zn(2+): histidine 64, glutamate 65, cysteine 94, cysteine 97, cysteine 100, and cysteine 108. NAD(+)-binding positions include isoleucine 176, aspartate 196, arginine 201, 271–273 (LGI), and 295–296 (IY).

This sequence belongs to the zinc-containing alcohol dehydrogenase family. As to quaternary structure, homotetramer. Zn(2+) is required as a cofactor.

The protein localises to the cytoplasm. The enzyme catalyses L-threonine + NAD(+) = (2S)-2-amino-3-oxobutanoate + NADH + H(+). Its pathway is amino-acid degradation; L-threonine degradation via oxydo-reductase pathway; glycine from L-threonine: step 1/2. Catalyzes the NAD(+)-dependent oxidation of L-threonine to 2-amino-3-ketobutyrate. In Francisella philomiragia subsp. philomiragia (strain ATCC 25017 / CCUG 19701 / FSC 153 / O#319-036), this protein is L-threonine 3-dehydrogenase.